Reading from the N-terminus, the 739-residue chain is Phosphoribosylformylglycinamidine synthase subunit PurL (739 aa).

H54 is an active-site residue. ATP-binding residues include Y57 and K96. A Mg(2+)-binding site is contributed by E98. Residues 99-102 (SHNH) and R121 contribute to the substrate site. The active-site Proton acceptor is H100. D122 serves as a coordination point for Mg(2+). Residue Q245 coordinates substrate. D273 provides a ligand contact to Mg(2+). 317-319 (ESQ) is a substrate binding site. Positions 500 and 537 each coordinate ATP. Mg(2+) is bound at residue N538. S540 is a substrate binding site.

The protein belongs to the FGAMS family. Monomer. Part of the FGAM synthase complex composed of 1 PurL, 1 PurQ and 2 PurS subunits.

Its subcellular location is the cytoplasm. The catalysed reaction is N(2)-formyl-N(1)-(5-phospho-beta-D-ribosyl)glycinamide + L-glutamine + ATP + H2O = 2-formamido-N(1)-(5-O-phospho-beta-D-ribosyl)acetamidine + L-glutamate + ADP + phosphate + H(+). It functions in the pathway purine metabolism; IMP biosynthesis via de novo pathway; 5-amino-1-(5-phospho-D-ribosyl)imidazole from N(2)-formyl-N(1)-(5-phospho-D-ribosyl)glycinamide: step 1/2. In terms of biological role, part of the phosphoribosylformylglycinamidine synthase complex involved in the purines biosynthetic pathway. Catalyzes the ATP-dependent conversion of formylglycinamide ribonucleotide (FGAR) and glutamine to yield formylglycinamidine ribonucleotide (FGAM) and glutamate. The FGAM synthase complex is composed of three subunits. PurQ produces an ammonia molecule by converting glutamine to glutamate. PurL transfers the ammonia molecule to FGAR to form FGAM in an ATP-dependent manner. PurS interacts with PurQ and PurL and is thought to assist in the transfer of the ammonia molecule from PurQ to PurL. The sequence is that of Phosphoribosylformylglycinamidine synthase subunit PurL from Bacillus cytotoxicus (strain DSM 22905 / CIP 110041 / 391-98 / NVH 391-98).